Consider the following 500-residue polypeptide: Potassium voltage-gated channel subfamily V member 1 (500 aa).

Residues 1 to 210 are Cytoplasmic-facing; it reads MPSSGRALLD…EKPGSSTAAR (210 aa). Positions 168–181 are enriched in basic and acidic residues; sequence KKDTEDQESQHESE. Positions 168–189 are disordered; that stretch reads KKDTEDQESQHESEQDFSQGPC. The chain crosses the membrane as a helical span at residues 211 to 231; the sequence is IFGVISIIFVVVSIINMALMS. The Extracellular portion of the chain corresponds to 232–238; it reads AELSWLD. A helical transmembrane segment spans residues 239–259; sequence LQLLEILEYVCISWFTGEFVL. Over 260-276 the chain is Cytoplasmic; that stretch reads RFLCVRDRCRFLRKVPN. The chain crosses the membrane as a helical span at residues 277-297; the sequence is IIDLLAILPFYITLLVESLSG. The Extracellular portion of the chain corresponds to 298-309; it reads SQTTQELENVGR. The helical; Voltage-sensor transmembrane segment at 310–331 threads the bilayer; the sequence is IVQVLRLLRALRMLKLGRHSTG. The Cytoplasmic segment spans residues 332–345; sequence LRSLGMTITQCYEE. A helical membrane pass occupies residues 346 to 366; it reads VGLLLLFLSVGISIFSTVEYF. Residues 392 to 397 carry the Selectivity filter motif; the sequence is TVGYGD. The helical transmembrane segment at 407-427 threads the bilayer; sequence IVAFMCILSGILVLALPIAII. The Cytoplasmic segment spans residues 428–500; it reads NDRFSACYFT…RSSGGDDFWF (73 aa).

Belongs to the potassium channel family. V (TC 1.A.1.2) subfamily. Kv8.1/KCNV1 sub-subfamily. Heteromultimer with KCNB1 and KCNB2. Interacts with KCNC4 and KCND1. Detected in brain.

Its subcellular location is the cell membrane. Its function is as follows. Potassium channel subunit that does not form functional channels by itself. Modulates KCNB1 and KCNB2 channel activity by shifting the threshold for inactivation to more negative values and by slowing the rate of inactivation. Can down-regulate the channel activity of KCNB1, KCNB2, KCNC4 and KCND1, possibly by trapping them in intracellular membranes. This chain is Potassium voltage-gated channel subfamily V member 1 (KCNV1), found in Homo sapiens (Human).